A 239-amino-acid polypeptide reads, in one-letter code: 2,3,4,5-tetrahydropyridine-2,6-dicarboxylate N-acetyltransferase (239 aa).

Belongs to the transferase hexapeptide repeat family. DapH subfamily.

It catalyses the reaction (S)-2,3,4,5-tetrahydrodipicolinate + acetyl-CoA + H2O = L-2-acetamido-6-oxoheptanedioate + CoA. It participates in amino-acid biosynthesis; L-lysine biosynthesis via DAP pathway; LL-2,6-diaminopimelate from (S)-tetrahydrodipicolinate (acetylase route): step 1/3. Catalyzes the transfer of an acetyl group from acetyl-CoA to tetrahydrodipicolinate. The protein is 2,3,4,5-tetrahydropyridine-2,6-dicarboxylate N-acetyltransferase of Staphylococcus aureus (strain MRSA252).